A 1271-amino-acid polypeptide reads, in one-letter code: DNA-directed RNA polymerase subunit beta (1271 aa).

Belongs to the RNA polymerase beta chain family. In terms of assembly, the RNAP catalytic core consists of 2 alpha, 1 beta, 1 beta' and 1 omega subunit. When a sigma factor is associated with the core the holoenzyme is formed, which can initiate transcription.

The enzyme catalyses RNA(n) + a ribonucleoside 5'-triphosphate = RNA(n+1) + diphosphate. DNA-dependent RNA polymerase catalyzes the transcription of DNA into RNA using the four ribonucleoside triphosphates as substrates. The polypeptide is DNA-directed RNA polymerase subunit beta (Acholeplasma laidlawii (strain PG-8A)).